The sequence spans 340 residues: Probable HTH-type transcriptional regulator EndR (340 aa).

The HTH lacI-type domain maps to M1–Q58. The H-T-H motif DNA-binding region spans M5–Q24.

Putative repressor of the endoglucanase operon. In Paenibacillus polymyxa (Bacillus polymyxa), this protein is Probable HTH-type transcriptional regulator EndR (endR).